The primary structure comprises 130 residues: Glycine cleavage system H protein (130 aa).

In terms of domain architecture, Lipoyl-binding spans Lys-22 to Glu-103. Residue Lys-63 is modified to N6-lipoyllysine.

This sequence belongs to the GcvH family. The glycine cleavage system is composed of four proteins: P, T, L and H. It depends on (R)-lipoate as a cofactor.

Its function is as follows. The glycine cleavage system catalyzes the degradation of glycine. The H protein shuttles the methylamine group of glycine from the P protein to the T protein. In Clostridium botulinum (strain Kyoto / Type A2), this protein is Glycine cleavage system H protein.